Here is a 430-residue protein sequence, read N- to C-terminus: Glucose-1-phosphate adenylyltransferase (430 aa).

Alpha-D-glucose 1-phosphate contacts are provided by residues Gly-163, 178–179, and Ser-210; that span reads EK.

The protein belongs to the bacterial/plant glucose-1-phosphate adenylyltransferase family. Homotetramer.

The enzyme catalyses alpha-D-glucose 1-phosphate + ATP + H(+) = ADP-alpha-D-glucose + diphosphate. It participates in glycan biosynthesis; glycogen biosynthesis. In terms of biological role, involved in the biosynthesis of ADP-glucose, a building block required for the elongation reactions to produce glycogen. Catalyzes the reaction between ATP and alpha-D-glucose 1-phosphate (G1P) to produce pyrophosphate and ADP-Glc. In Synechococcus elongatus (strain ATCC 33912 / PCC 7942 / FACHB-805) (Anacystis nidulans R2), this protein is Glucose-1-phosphate adenylyltransferase.